The following is a 956-amino-acid chain: Glycine dehydrogenase (decarboxylating) (956 aa).

An N6-(pyridoxal phosphate)lysine modification is found at Lys-697.

The protein belongs to the GcvP family. The glycine cleavage system is composed of four proteins: P, T, L and H. Pyridoxal 5'-phosphate serves as cofactor.

It catalyses the reaction N(6)-[(R)-lipoyl]-L-lysyl-[glycine-cleavage complex H protein] + glycine + H(+) = N(6)-[(R)-S(8)-aminomethyldihydrolipoyl]-L-lysyl-[glycine-cleavage complex H protein] + CO2. The glycine cleavage system catalyzes the degradation of glycine. The P protein binds the alpha-amino group of glycine through its pyridoxal phosphate cofactor; CO(2) is released and the remaining methylamine moiety is then transferred to the lipoamide cofactor of the H protein. In Cereibacter sphaeroides (strain KD131 / KCTC 12085) (Rhodobacter sphaeroides), this protein is Glycine dehydrogenase (decarboxylating).